A 562-amino-acid polypeptide reads, in one-letter code: IRK-interacting protein (562 aa).

2 disordered regions span residues 29 to 61 (ASLM…RPLP) and 303 to 322 (VVSQ…SEMP). A compositionally biased stretch (low complexity) spans 36 to 61 (SSPSSNYSLRNPSSSSAASPASRPLP). Residues 246–306 (SGVEKLKREL…LREATEVVSQ (61 aa)) are a coiled coil.

In terms of assembly, interacts with IRK. In terms of tissue distribution, highly expressed in root tips, shoot apices and developing flowers.

The polypeptide is IRK-interacting protein (Arabidopsis thaliana (Mouse-ear cress)).